A 268-amino-acid chain; its full sequence is Small ribosomal subunit protein uS3 (268 aa).

The region spanning 39-107 is the KH type-2 domain; that stretch reads VREYLKKKLK…PVHVNIEEIR (69 aa). The disordered stretch occupies residues 216–268; the sequence is VEEVAEEKRPRRNARPGGDRRPRRDGEGGGPAGARRGAPRRAGGAGGDGKTGE. A compositionally biased stretch (basic and acidic residues) spans 232-242; the sequence is GGDRRPRRDGE. Over residues 248 to 257 the composition is skewed to low complexity; that stretch reads GARRGAPRRA. A compositionally biased stretch (gly residues) spans 258-268; it reads GGAGGDGKTGE.

This sequence belongs to the universal ribosomal protein uS3 family. In terms of assembly, part of the 30S ribosomal subunit. Forms a tight complex with proteins S10 and S14.

Binds the lower part of the 30S subunit head. Binds mRNA in the 70S ribosome, positioning it for translation. The polypeptide is Small ribosomal subunit protein uS3 (Paraburkholderia phytofirmans (strain DSM 17436 / LMG 22146 / PsJN) (Burkholderia phytofirmans)).